A 146-amino-acid polypeptide reads, in one-letter code: 3-hydroxyacyl-[acyl-carrier-protein] dehydratase FabZ (146 aa).

The active site involves His48.

This sequence belongs to the thioester dehydratase family. FabZ subfamily.

It localises to the cytoplasm. It catalyses the reaction a (3R)-hydroxyacyl-[ACP] = a (2E)-enoyl-[ACP] + H2O. Its function is as follows. Involved in unsaturated fatty acids biosynthesis. Catalyzes the dehydration of short chain beta-hydroxyacyl-ACPs and long chain saturated and unsaturated beta-hydroxyacyl-ACPs. The polypeptide is 3-hydroxyacyl-[acyl-carrier-protein] dehydratase FabZ (Campylobacter jejuni subsp. jejuni serotype O:6 (strain 81116 / NCTC 11828)).